We begin with the raw amino-acid sequence, 387 residues long: Mannitol-1-phosphate 5-dehydrogenase (387 aa).

3–14 (ALHFGAGNIGRG) lines the NAD(+) pocket.

Belongs to the mannitol dehydrogenase family.

The catalysed reaction is D-mannitol 1-phosphate + NAD(+) = beta-D-fructose 6-phosphate + NADH + H(+). This Yersinia pseudotuberculosis serotype O:3 (strain YPIII) protein is Mannitol-1-phosphate 5-dehydrogenase.